Here is a 455-residue protein sequence, read N- to C-terminus: Argininosuccinate lyase (455 aa).

The protein belongs to the lyase 1 family. Argininosuccinate lyase subfamily.

Its subcellular location is the cytoplasm. It catalyses the reaction 2-(N(omega)-L-arginino)succinate = fumarate + L-arginine. Its pathway is amino-acid biosynthesis; L-arginine biosynthesis; L-arginine from L-ornithine and carbamoyl phosphate: step 3/3. The chain is Argininosuccinate lyase from Shewanella sp. (strain ANA-3).